Here is a 1403-residue protein sequence, read N- to C-terminus: DNA-directed RNA polymerase subunit beta' (1403 aa).

Zn(2+) contacts are provided by Cys-70, Cys-72, Cys-85, and Cys-88. 3 residues coordinate Mg(2+): Asp-461, Asp-463, and Asp-465. Positions 687–708 (QQISQEETTGDRDGKRETRKQP) are disordered. A compositionally biased stretch (basic and acidic residues) spans 695–706 (TGDRDGKRETRK). Residues Cys-805, Cys-879, Cys-886, and Cys-889 each coordinate Zn(2+). The interval 1381–1403 (THGDTGPLGEPSRPVGTQTTGAA) is disordered.

Belongs to the RNA polymerase beta' chain family. The RNAP catalytic core consists of 2 alpha, 1 beta, 1 beta' and 1 omega subunit. When a sigma factor is associated with the core the holoenzyme is formed, which can initiate transcription. The cofactor is Mg(2+). Zn(2+) is required as a cofactor.

The enzyme catalyses RNA(n) + a ribonucleoside 5'-triphosphate = RNA(n+1) + diphosphate. DNA-dependent RNA polymerase catalyzes the transcription of DNA into RNA using the four ribonucleoside triphosphates as substrates. The protein is DNA-directed RNA polymerase subunit beta' of Myxococcus xanthus (strain DK1622).